A 537-amino-acid chain; its full sequence is Extracellular exo-inulinase inuE (537 aa).

A signal peptide spans 1–19 (MARLLKAVTVCALAGIAHA). D41 is an active-site residue. N-linked (GlcNAc...) asparagine glycans are attached at residues N49, N67, N112, N300, N363, N398, N430, and N531.

The protein belongs to the glycosyl hydrolase 32 family.

The protein localises to the secreted. It catalyses the reaction Hydrolysis of terminal, non-reducing (2-&gt;1)- and (2-&gt;6)-linked beta-D-fructofuranose residues in fructans.. With respect to regulation, the catalytic activity is increased by manganese cathions, but strongly inhibited by other metal ions such as copper, aluminum, silver, iron, nickel, zinc and magnesium cathions. Exo-inulinase involved in utilization of the plant storage polymer inulin, consisting of fructooligosaccharides with a degree of polymerization (DP) value from 2 to 60. Splits off terminal fructose units successively from the non-reducing end of the inulin molecule, and also hydrolyze sucrose and raffinose. The protein is Extracellular exo-inulinase inuE (exoI) of Aspergillus ficuum.